The primary structure comprises 366 residues: Phospho-N-acetylmuramoyl-pentapeptide-transferase (366 aa).

Transmembrane regions (helical) follow at residues 27–47 (GAAI…ISLL), 76–96 (PTMG…IWVI), 101–121 (FFWL…WDDF), 136–156 (IKLL…LADP), 176–196 (IDIG…SSNA), 205–225 (GLAA…SYIS), 241–261 (GAGE…GFLW), 264–284 (CYPA…SALG), 285–305 (VVAI…IFVI), and 343–363 (AVTV…LSSL).

The protein belongs to the glycosyltransferase 4 family. MraY subfamily. The cofactor is Mg(2+).

It localises to the cell inner membrane. The enzyme catalyses UDP-N-acetyl-alpha-D-muramoyl-L-alanyl-gamma-D-glutamyl-meso-2,6-diaminopimeloyl-D-alanyl-D-alanine + di-trans,octa-cis-undecaprenyl phosphate = di-trans,octa-cis-undecaprenyl diphospho-N-acetyl-alpha-D-muramoyl-L-alanyl-D-glutamyl-meso-2,6-diaminopimeloyl-D-alanyl-D-alanine + UMP. The protein operates within cell wall biogenesis; peptidoglycan biosynthesis. Functionally, catalyzes the initial step of the lipid cycle reactions in the biosynthesis of the cell wall peptidoglycan: transfers peptidoglycan precursor phospho-MurNAc-pentapeptide from UDP-MurNAc-pentapeptide onto the lipid carrier undecaprenyl phosphate, yielding undecaprenyl-pyrophosphoryl-MurNAc-pentapeptide, known as lipid I. The polypeptide is Phospho-N-acetylmuramoyl-pentapeptide-transferase (Methylacidiphilum infernorum (isolate V4) (Methylokorus infernorum (strain V4))).